The primary structure comprises 94 residues: MNLANLQLFAHKKGGGSTSNGRDSQAKRLGAKAADGQTVSGGSILYRQRGTHIYPGVNVGRGGDDTLFAKVEGVVRFERKGRDKKQVSVYPVAK.

Residues 1-9 (MNLANLQLF) constitute a propeptide that is removed on maturation. The interval 11 to 34 (HKKGGGSTSNGRDSQAKRLGAKAA) is disordered.

It belongs to the bacterial ribosomal protein bL27 family. In terms of processing, the N-terminus is cleaved by ribosomal processing cysteine protease Prp.

In Streptococcus pyogenes serotype M3 (strain ATCC BAA-595 / MGAS315), this protein is Large ribosomal subunit protein bL27.